Reading from the N-terminus, the 454-residue chain is Bifunctional protein GlmU (454 aa).

The segment at 1 to 227 (MSKLSVVILA…MMEVEGANNR (227 aa)) is pyrophosphorylase. UDP-N-acetyl-alpha-D-glucosamine-binding positions include 9 to 12 (LAAG), lysine 23, glutamine 74, 79 to 80 (GT), 101 to 103 (YGD), glycine 138, glutamate 152, asparagine 167, and asparagine 225. Aspartate 103 is a Mg(2+) binding site. Position 225 (asparagine 225) interacts with Mg(2+). The linker stretch occupies residues 228-248 (LQLAALERYFQRKQATALLLA). An N-acetyltransferase region spans residues 249 to 454 (GVSLADPERF…ADWERPSKKK (206 aa)). Residues arginine 331 and lysine 349 each contribute to the UDP-N-acetyl-alpha-D-glucosamine site. Histidine 361 serves as the catalytic Proton acceptor. Residues tyrosine 364 and asparagine 375 each coordinate UDP-N-acetyl-alpha-D-glucosamine. Residues alanine 378, 384–385 (NY), serine 403, alanine 421, and arginine 438 contribute to the acetyl-CoA site.

The protein in the N-terminal section; belongs to the N-acetylglucosamine-1-phosphate uridyltransferase family. It in the C-terminal section; belongs to the transferase hexapeptide repeat family. In terms of assembly, homotrimer. The cofactor is Mg(2+).

The protein resides in the cytoplasm. The enzyme catalyses alpha-D-glucosamine 1-phosphate + acetyl-CoA = N-acetyl-alpha-D-glucosamine 1-phosphate + CoA + H(+). It carries out the reaction N-acetyl-alpha-D-glucosamine 1-phosphate + UTP + H(+) = UDP-N-acetyl-alpha-D-glucosamine + diphosphate. The protein operates within nucleotide-sugar biosynthesis; UDP-N-acetyl-alpha-D-glucosamine biosynthesis; N-acetyl-alpha-D-glucosamine 1-phosphate from alpha-D-glucosamine 6-phosphate (route II): step 2/2. It participates in nucleotide-sugar biosynthesis; UDP-N-acetyl-alpha-D-glucosamine biosynthesis; UDP-N-acetyl-alpha-D-glucosamine from N-acetyl-alpha-D-glucosamine 1-phosphate: step 1/1. Its pathway is bacterial outer membrane biogenesis; LPS lipid A biosynthesis. In terms of biological role, catalyzes the last two sequential reactions in the de novo biosynthetic pathway for UDP-N-acetylglucosamine (UDP-GlcNAc). The C-terminal domain catalyzes the transfer of acetyl group from acetyl coenzyme A to glucosamine-1-phosphate (GlcN-1-P) to produce N-acetylglucosamine-1-phosphate (GlcNAc-1-P), which is converted into UDP-GlcNAc by the transfer of uridine 5-monophosphate (from uridine 5-triphosphate), a reaction catalyzed by the N-terminal domain. The sequence is that of Bifunctional protein GlmU from Actinobacillus succinogenes (strain ATCC 55618 / DSM 22257 / CCUG 43843 / 130Z).